Consider the following 243-residue polypeptide: uncharacterized protein (243 aa).

One can recognise a GP-PDE domain in the interval 2 to 240 (TKIFAHRGAS…DFPEKASALL (239 aa)).

This is an uncharacterized protein from Bacillus subtilis (strain 168).